Consider the following 174-residue polypeptide: Ubiquitin-fold modifier-conjugating enzyme 1 (174 aa).

Cys-119 functions as the Glycyl thioester intermediate in the catalytic mechanism.

It belongs to the ubiquitin-conjugating enzyme family. UFC1 subfamily.

In terms of biological role, E2-like enzyme which forms an intermediate with UFM1 via a thioester linkage. This is Ubiquitin-fold modifier-conjugating enzyme 1 from Arabidopsis thaliana (Mouse-ear cress).